Here is a 245-residue protein sequence, read N- to C-terminus: tRNA pseudouridine synthase A 2 (245 aa).

The Nucleophile role is filled by D53. A substrate-binding site is contributed by Y111.

This sequence belongs to the tRNA pseudouridine synthase TruA family. As to quaternary structure, homodimer.

It catalyses the reaction uridine(38/39/40) in tRNA = pseudouridine(38/39/40) in tRNA. Formation of pseudouridine at positions 38, 39 and 40 in the anticodon stem and loop of transfer RNAs. The protein is tRNA pseudouridine synthase A 2 of Bacillus anthracis.